The chain runs to 407 residues: MSVEGKNVDSYSGLTASVQHEHTHPVHNRGVALETTTQHAFITVASQLKPDLKGEDEEHNLELELHKFLSQHNHGPPSSGTTGTTLAGVPDFSASHNISHRDEMAEAIEKAMAEIACPELWNNDHSSAGATVGGDVHLDTLTMDGILGNEEPFVQVHEGALGSVDMDGQRYPHGRNSLSSIVGSKAIIQQSMDIHPTAQGGARSRQSTEEVGMHICATPNGKRKNAGVASSQATVKRSRLFYETISPESLSPLSDNSDFLKAMDTKGSGVQNVPISTSVTAGALGHGAKNIKGYQNASKINMASNIPKEKLQVHSTPPVVSILPEKLTQEFTMQQVMETKRRIINTHKLILNFNFLKESYTRSCSELKRTVFKLKESECHRARLAKENEQLKRLVIELNERMKNPSK.

Its subcellular location is the cytoplasm. It is found in the nucleus. Its function is as follows. Involved in cation homeostasis and in the regulation of the cation stress signaling cascades. The chain is Protein ATC1/LIC4 (ATC1) from Eremothecium gossypii (strain ATCC 10895 / CBS 109.51 / FGSC 9923 / NRRL Y-1056) (Yeast).